Here is a 1031-residue protein sequence, read N- to C-terminus: Protein translocase subunit SecA (1031 aa).

ATP-binding positions include Q143, 161–165, and D662; that span reads GEGKT. Zn(2+) is bound by residues C1015, C1017, C1026, and C1027.

Belongs to the SecA family. In terms of assembly, monomer and homodimer. Part of the essential Sec protein translocation apparatus which comprises SecA, SecYEG and auxiliary proteins SecDF. Other proteins may also be involved. Zn(2+) is required as a cofactor.

It localises to the cell inner membrane. The protein resides in the cytoplasm. It catalyses the reaction ATP + H2O + cellular proteinSide 1 = ADP + phosphate + cellular proteinSide 2.. Functionally, part of the Sec protein translocase complex. Interacts with the SecYEG preprotein conducting channel. Has a central role in coupling the hydrolysis of ATP to the transfer of proteins into and across the cell membrane, serving as an ATP-driven molecular motor driving the stepwise translocation of polypeptide chains across the membrane. The protein is Protein translocase subunit SecA of Chlorobaculum tepidum (strain ATCC 49652 / DSM 12025 / NBRC 103806 / TLS) (Chlorobium tepidum).